A 370-amino-acid polypeptide reads, in one-letter code: tRNA-specific 2-thiouridylase MnmA (370 aa).

Residues 24–31 (AMSGGVDS) and L50 contribute to the ATP site. The active-site Nucleophile is the C118. C118 and C214 form a disulfide bridge. ATP is bound at residue G142. Residues 164–166 (KDQ) are interaction with tRNA. Catalysis depends on C214, which acts as the Cysteine persulfide intermediate.

This sequence belongs to the MnmA/TRMU family.

The protein resides in the cytoplasm. It carries out the reaction S-sulfanyl-L-cysteinyl-[protein] + uridine(34) in tRNA + AH2 + ATP = 2-thiouridine(34) in tRNA + L-cysteinyl-[protein] + A + AMP + diphosphate + H(+). In terms of biological role, catalyzes the 2-thiolation of uridine at the wobble position (U34) of tRNA, leading to the formation of s(2)U34. The sequence is that of tRNA-specific 2-thiouridylase MnmA from Ehrlichia ruminantium (strain Welgevonden).